We begin with the raw amino-acid sequence, 164 residues long: Protein SprT (164 aa).

In terms of domain architecture, SprT-like spans 13-156; it reads YQQAEAFFKR…LCKRCREILV (144 aa). Residue histidine 69 coordinates Zn(2+). Glutamate 70 is a catalytic residue. Histidine 73 serves as a coordination point for Zn(2+).

The protein belongs to the SprT family. Requires Zn(2+) as cofactor.

Its subcellular location is the cytoplasm. This chain is Protein SprT, found in Pseudomonas putida (strain ATCC 700007 / DSM 6899 / JCM 31910 / BCRC 17059 / LMG 24140 / F1).